The following is a 475-amino-acid chain: Putative aldehyde dehydrogenase (475 aa).

NAD(+)-binding positions include 146-147 (WN) and 223-224 (GS). The active-site Proton acceptor is the Glu245. Leu246 contributes to the NAD(+) binding site. The Nucleophile role is filled by Cys279. Glu379 is a binding site for NAD(+).

Belongs to the aldehyde dehydrogenase family.

The enzyme catalyses an aldehyde + NAD(+) + H2O = a carboxylate + NADH + 2 H(+). This Staphylococcus aureus (strain bovine RF122 / ET3-1) protein is Putative aldehyde dehydrogenase.